The following is a 536-amino-acid chain: Protein Rep68 (536 aa).

Residues 1–199 (MPGFYEIVIK…AQHLTHVSQT (199 aa)) enclose the PV NS1-Nuc domain. Residues Glu-83, His-90, and His-92 each coordinate a divalent metal cation. The RCR-2 signature appears at 90–92 (HMH). Tyr-156 serves as the catalytic For nuclease activity. The RCR-3 motif lies at 156 to 160 (YLLPK). Positions 196-211 (VSQTQEQNKENQNPNS) are enriched in polar residues. The tract at residues 196–216 (VSQTQEQNKENQNPNSDAPVI) is disordered. In terms of domain architecture, SF3 helicase spans 308–463 (DPQYAASVFL…LDHDFGKVTK (156 aa)). Residue 334-341 (GPATTGKT) coordinates ATP. The segment at 488–536 (KGGAKKRPAPSDADISEPKRVRESVAQPSTSDAEASINYADRLARGHSL) is disordered.

As to quaternary structure, interacts with host TOPORS. Interacts with host KCTD5. A divalent metal cation is required as a cofactor.

The protein resides in the host nucleus. It catalyses the reaction ATP + H2O = ADP + phosphate + H(+). Plays an essential role in the initiation of viral DNA synthesis. Binds specifically to an inverted terminal repeat element (ITR) on the 3' and 5' ends of the viral DNA, where it cleaves a site specifically to generate a priming site for initiation of the synthesis of a complementary strand. Also plays a role as transcriptional regulator, DNA helicase and as key factor in site-specific integration of the viral genome. Inhibits the host cell cycle G1/S and G2/M transitions. These arrests may provide essential cellular factors for viral DNA replication. This Mammalia (AAV-2) protein is Protein Rep68 (Rep68).